Consider the following 159-residue polypeptide: MSITAVYPGTFDPITCGHFDLIERAARFYDRLVIAVADNRNKTALFSLEKRVALAKEVTADMPNVEVIGFSGLLVDFVREIDGNVLLRGLRAVSDFEYEFQLASMNRKLAPEVETMFMTPAEQYAFISSSLVREISALGGDVSEFVHPVVAKALNEKQL.

Thr-10 contributes to the substrate binding site. ATP contacts are provided by residues 10 to 11 (TF) and His-18. Positions 42, 74, and 88 each coordinate substrate. Residues 89 to 91 (GLR), Glu-99, and 124 to 130 (YAFISSS) each bind ATP.

The protein belongs to the bacterial CoaD family. In terms of assembly, homohexamer. The cofactor is Mg(2+).

The protein localises to the cytoplasm. The catalysed reaction is (R)-4'-phosphopantetheine + ATP + H(+) = 3'-dephospho-CoA + diphosphate. It participates in cofactor biosynthesis; coenzyme A biosynthesis; CoA from (R)-pantothenate: step 4/5. Its function is as follows. Reversibly transfers an adenylyl group from ATP to 4'-phosphopantetheine, yielding dephospho-CoA (dPCoA) and pyrophosphate. In Hydrogenovibrio crunogenus (strain DSM 25203 / XCL-2) (Thiomicrospira crunogena), this protein is Phosphopantetheine adenylyltransferase.